The following is a 449-amino-acid chain: Glucose-6-phosphate isomerase (449 aa).

Glu-291 (proton donor) is an active-site residue. Active-site residues include His-312 and Lys-426.

It belongs to the GPI family.

The protein resides in the cytoplasm. The catalysed reaction is alpha-D-glucose 6-phosphate = beta-D-fructose 6-phosphate. Its pathway is carbohydrate biosynthesis; gluconeogenesis. It participates in carbohydrate degradation; glycolysis; D-glyceraldehyde 3-phosphate and glycerone phosphate from D-glucose: step 2/4. Functionally, catalyzes the reversible isomerization of glucose-6-phosphate to fructose-6-phosphate. This is Glucose-6-phosphate isomerase from Streptococcus pneumoniae (strain CGSP14).